The primary structure comprises 377 residues: Homoserine O-acetyltransferase (377 aa).

In terms of domain architecture, AB hydrolase-1 spans 47–355; it reads NAILICHALT…DYGHDAFLLE (309 aa). Residue Ser-153 is the Nucleophile of the active site. A substrate-binding site is contributed by Arg-222. Catalysis depends on residues Asp-316 and His-349. Position 350 (Asp-350) interacts with substrate.

The protein belongs to the AB hydrolase superfamily. MetX family. In terms of assembly, homodimer.

Its subcellular location is the cytoplasm. The enzyme catalyses L-homoserine + acetyl-CoA = O-acetyl-L-homoserine + CoA. It participates in amino-acid biosynthesis; L-methionine biosynthesis via de novo pathway; O-acetyl-L-homoserine from L-homoserine: step 1/1. Transfers an acetyl group from acetyl-CoA to L-homoserine, forming acetyl-L-homoserine. The sequence is that of Homoserine O-acetyltransferase from Deferribacter desulfuricans (strain DSM 14783 / JCM 11476 / NBRC 101012 / SSM1).